Here is a 507-residue protein sequence, read N- to C-terminus: Bifunctional purine biosynthesis protein PurH (507 aa).

One can recognise an MGS-like domain in the interval 1 to 144 (MKRALLSVSD…KNSDSVWAVV (144 aa)).

Belongs to the PurH family.

The catalysed reaction is (6R)-10-formyltetrahydrofolate + 5-amino-1-(5-phospho-beta-D-ribosyl)imidazole-4-carboxamide = 5-formamido-1-(5-phospho-D-ribosyl)imidazole-4-carboxamide + (6S)-5,6,7,8-tetrahydrofolate. It catalyses the reaction IMP + H2O = 5-formamido-1-(5-phospho-D-ribosyl)imidazole-4-carboxamide. It functions in the pathway purine metabolism; IMP biosynthesis via de novo pathway; 5-formamido-1-(5-phospho-D-ribosyl)imidazole-4-carboxamide from 5-amino-1-(5-phospho-D-ribosyl)imidazole-4-carboxamide (10-formyl THF route): step 1/1. Its pathway is purine metabolism; IMP biosynthesis via de novo pathway; IMP from 5-formamido-1-(5-phospho-D-ribosyl)imidazole-4-carboxamide: step 1/1. This is Bifunctional purine biosynthesis protein PurH from Lacticaseibacillus casei (strain BL23) (Lactobacillus casei).